Here is a 609-residue protein sequence, read N- to C-terminus: UvrABC system protein C (609 aa).

A GIY-YIG domain is found at 19-97 (ASPGCYLWKS…IKKHNPRFNV (79 aa)). In terms of domain architecture, UVR spans 208–243 (ESLVSDLNIKMSNASERLDFEKAARYRDMLQRIQNF).

The protein belongs to the UvrC family. Interacts with UvrB in an incision complex.

The protein localises to the cytoplasm. In terms of biological role, the UvrABC repair system catalyzes the recognition and processing of DNA lesions. UvrC both incises the 5' and 3' sides of the lesion. The N-terminal half is responsible for the 3' incision and the C-terminal half is responsible for the 5' incision. This is UvrABC system protein C from Leptospira interrogans serogroup Icterohaemorrhagiae serovar Lai (strain 56601).